The following is a 436-amino-acid chain: Adenylosuccinate synthetase (436 aa).

Residues 13–19 (GDEGKGK) and 41–43 (GHT) contribute to the GTP site. Asp14 functions as the Proton acceptor in the catalytic mechanism. The Mg(2+) site is built by Asp14 and Gly41. Residues 14-17 (DEGK), 39-42 (NAGH), Thr131, Arg145, Gln226, Thr241, and Arg309 contribute to the IMP site. The active-site Proton donor is the His42. 305–311 (TVTGRKR) contributes to the substrate binding site. GTP contacts are provided by residues Arg311, 337-339 (KLD), and 419-421 (STG).

Belongs to the adenylosuccinate synthetase family. Homodimer. Mg(2+) serves as cofactor.

It localises to the cytoplasm. It carries out the reaction IMP + L-aspartate + GTP = N(6)-(1,2-dicarboxyethyl)-AMP + GDP + phosphate + 2 H(+). It functions in the pathway purine metabolism; AMP biosynthesis via de novo pathway; AMP from IMP: step 1/2. In terms of biological role, plays an important role in the de novo pathway of purine nucleotide biosynthesis. Catalyzes the first committed step in the biosynthesis of AMP from IMP. In Aromatoleum aromaticum (strain DSM 19018 / LMG 30748 / EbN1) (Azoarcus sp. (strain EbN1)), this protein is Adenylosuccinate synthetase.